We begin with the raw amino-acid sequence, 141 residues long: Drosulfakinins (141 aa).

Residues 1-31 (MGLRRCTHFATLVMPLWALALFFLVVMQVPA) form the signal peptide. The propeptide occupies 32–73 (QTTSLQISKEDRRLQELESKMGAESEQPNANLVGPSISRFGD). Residues 49 to 69 (ESKMGAESEQPNANLVGPSIS) form a disordered region. F82 is modified (phenylalanine amide). Positions 86–111 (VPLISRPMIPIELDLLMDNDDERTKA) are excised as a propeptide. Y117 is subject to Sulfotyrosine. Position 122 is a phenylalanine amide (F122). Sulfotyrosine is present on Y134. Residue F139 is modified to Phenylalanine amide.

Belongs to the gastrin/cholecystokinin family.

It is found in the secreted. Drosulfakinin-0 (DSK 0) plays diverse biological roles including regulating gut muscle contraction in adults but not in larvae. The sequence is that of Drosulfakinins from Drosophila erecta (Fruit fly).